Consider the following 692-residue polypeptide: Transforming growth factor beta activator LRRC33 (692 aa).

The signal sequence occupies residues 1 to 18 (MELLPLWLCLGFHFLTVG). At 19 to 650 (WRNRSGTATA…CKWERLDLGL (632 aa)) the chain is on the extracellular side. Residue asparagine 21 is glycosylated (N-linked (GlcNAc...) asparagine). One can recognise an LRRNT domain in the interval 29–56 (ASQGVCKLVGGAADCRGQSLASVPSSLP). LRR repeat units lie at residues 58–79 (HARMLTLDANPLKTLWNHSLQP), 82–103 (LLESLSLHSCHLERISRGAFQE), 106–127 (HLRSLVLGDNCLSENYEETAAA), 133–155 (GLRRLDLSGNALTEDMAALMLQN), 158–179 (SLRSVSLAGNTIMRLDDSVFEG), 182–203 (RLRELDLQRNYIFEIEGGAFDG), 206–227 (ELRHLNLAFNNLPCIVDFGLTR), 228–239 (LRVLNVSYNVLE), 251–272 (ELETLDLSHNQLLFFPLLPQYS), and 273–294 (KLRTLLLRDNNMGFYRDLYNTS). Asparagine 74 carries an N-linked (GlcNAc...) asparagine glycan. Residue asparagine 155 is glycosylated (N-linked (GlcNAc...) asparagine). A glycan (N-linked (GlcNAc...) asparagine) is linked at asparagine 232. Residues asparagine 292, asparagine 309, and asparagine 312 are each glycosylated (N-linked (GlcNAc...) asparagine). 11 LRR repeats span residues 329-350 (DLRFLDMSQNQFQYLPDGFLRK), 353-374 (SLSHLNLHQNCLMTLHIREHEP), 377-398 (ALTELDLSHNQLSELHLAPGLA), 403-424 (SLRLFNLSSNQLLGVPPGLFAN), 427-447 (NITTLDMSHNQISLCPLPAAS), 463-484 (SLRSLSLEGCGLGALPDCPFQG), 486-507 (SLTYLDLSSNWGVLNGSLAPLQ), 512-534 (MLQVLSLRNMGLHSSFMALDFSG), 537-558 (NLRDLDLSGNCLTTFPRFGGSL), 559-580 (ALETLDLRRNSLTALPQKAVSE), and 585-594 (GLRTIYLSQN). N-linked (GlcNAc...) asparagine glycans are attached at residues asparagine 408 and asparagine 427. N-linked (GlcNAc...) asparagine glycosylation is present at asparagine 500. Residues 595-643 (PYDCCGVDGWGALQHGQTVADWAMVTCNLSSKIIRVTELPGGVPRDCKW) enclose the LRRCT domain. Asparagine 622 carries an N-linked (GlcNAc...) asparagine glycan. The helical transmembrane segment at 651–671 (LYLVLILPSCLTLLVACTVIV) threads the bilayer. Residues 672–692 (LTFKKPLLQVIKSRCHWSSVY) lie on the Cytoplasmic side of the membrane.

This sequence belongs to the LRRC32/LRRC33 family. Interacts with TGFB1; associates via disulfide bonds with the Latency-associated peptide chain (LAP) regulatory chain of TGFB1, leading to regulate activation of TGF-beta-1. Interacts (via LRR repeats) with TLR2, TLR3, TLR4, TLR9 and probably other Toll-like receptors. Interacts with CYBB/NOX2; the interaction is direct. As to expression, mainly expressed in cells of hematopoietic origin. Highly expressed in bone marrow, thymus, liver, lung, intestine and spleen. In the brain, highly expressed in microglia.

It is found in the cell membrane. Its subcellular location is the endoplasmic reticulum membrane. Its function is as follows. Key regulator of transforming growth factor beta-1 (TGFB1) specifically required for microglia function in the nervous system. Required for activation of latent TGF-beta-1 in macrophages and microglia: associates specifically via disulfide bonds with the Latency-associated peptide (LAP), which is the regulatory chain of TGFB1, and regulates integrin-dependent activation of TGF-beta-1. TGF-beta-1 activation mediated by LRRC33/NRROS is highly localized: there is little spreading of TGF-beta-1 activated from one microglial cell to neighboring microglia, suggesting the existence of localized and selective activation of TGF-beta-1 by LRRC33/NRROS. Indirectly plays a role in Toll-like receptor (TLR) signaling: ability to inhibit TLR-mediated NF-kappa-B activation and cytokine production is probably a consequence of its role in TGF-beta-1 signaling. This is Transforming growth factor beta activator LRRC33 from Homo sapiens (Human).